Consider the following 98-residue polypeptide: NADH-ubiquinone oxidoreductase chain 4L (98 aa).

The next 3 helical transmembrane spans lie at 1–21 (MSMV…GLLM), 29–49 (SLLC…MTIL), and 61–81 (IILL…LVMV).

This sequence belongs to the complex I subunit 4L family. In terms of assembly, core subunit of respiratory chain NADH dehydrogenase (Complex I) which is composed of 45 different subunits.

It localises to the mitochondrion inner membrane. It catalyses the reaction a ubiquinone + NADH + 5 H(+)(in) = a ubiquinol + NAD(+) + 4 H(+)(out). Core subunit of the mitochondrial membrane respiratory chain NADH dehydrogenase (Complex I) which catalyzes electron transfer from NADH through the respiratory chain, using ubiquinone as an electron acceptor. Part of the enzyme membrane arm which is embedded in the lipid bilayer and involved in proton translocation. This chain is NADH-ubiquinone oxidoreductase chain 4L (MT-ND4L), found in Arctocephalus australis (South American fur seal).